The chain runs to 35 residues: RWKIFKKIEKVGQNIRDGIVKAGPAVAVVGQAATI.

I35 is subject to Isoleucine amide.

This sequence belongs to the cecropin family.

It localises to the secreted. Functionally, cecropins have lytic and antibacterial activity against several Gram-positive and Gram-negative bacteria. The polypeptide is Cecropin (Bombyx mori (Silk moth)).